The sequence spans 82 residues: Colonization factor (82 aa).

The signal sequence occupies residues 1-33 (MFSSLKNKLNTFKSTLSLGVFLLFSAFANQALA).

The protein resides in the secreted. The polypeptide is Colonization factor (cep) (Vibrio cholerae serotype O1 (strain ATCC 39315 / El Tor Inaba N16961)).